The sequence spans 377 residues: Flagellin (377 aa).

This sequence belongs to the bacterial flagellin family.

Its subcellular location is the secreted. It localises to the bacterial flagellum. Its function is as follows. Flagellin is the subunit protein which polymerizes to form the filaments of bacterial flagella. In Clostridium tyrobutyricum, this protein is Flagellin (fla).